The primary structure comprises 310 residues: Repression factor of MSEs protein 1 (310 aa).

Disordered regions lie at residues 83-155 (TQEV…EANA) and 192-230 (DGIR…DEGE). Residues 92–106 (RNTSSSSSSTRSNSS) show a composition bias toward low complexity. The segment covering 107–120 (ADISDTEYSGENTP) has biased composition (polar residues). Positions 127 to 136 (SRRRRTRSRA) are enriched in basic residues. Positions 139-155 (RENSLPASLPSISEANA) are enriched in polar residues. Basic and acidic residues predominate over residues 192 to 208 (DGIRRRSSRISERDKRR). At Ser215 the chain carries Phosphoserine.

In terms of assembly, interacts directly with HST1 and SUM1. Required for the interaction between HST1 and SUM1.

The protein resides in the nucleus. Functionally, tethering factor required for histone deacetylase HST1-mediated repression. Probably involved in targeting HST1 to a subset of SUM1-regulated genes. The sequence is that of Repression factor of MSEs protein 1 (RFM1) from Saccharomyces cerevisiae (strain ATCC 204508 / S288c) (Baker's yeast).